We begin with the raw amino-acid sequence, 229 residues long: MSSLKKILGLKGKGKKSKKLGIAPPPYEEDTSMEYAPSAPIDKSYFGVDEMDTHDPNQLRYEKFFFTVKMTVRSNRPFRTYSDVAAAVSHWDHMYIGMAGKRPFYKILAFLGSSNLKATPAVLADQGQPEYHAHCEGRAYLPHRMGKTPPMLNVPEHFRRPFNIGLYKGTIELTMTIYDDESLEAAPMIWDHFNSSKFSDFREKALMFGLIVEKKASGAWVLDSVSHFK.

Over residues 1-10 the composition is skewed to low complexity; sequence MSSLKKILGL. The tract at residues 1–23 is disordered; sequence MSSLKKILGLKGKGKKSKKLGIA. The short motif at 2 to 4 is the dynamin binding element; that stretch reads SSL. A PPXY motif motif is present at residues 24-27; it reads PPPY. A PTAP/PSAP motif motif is present at residues 37-40; it reads PSAP.

The protein belongs to the vesiculoviruses matrix protein family. Homomultimer. Interacts with viral nucleocapsid; this interaction contributes to the virion assembly. Interacts with the viral envelope glycoprotein; this interaction contributes to the virion assembly. Interacts with host RAE1-NUP98 complex. Interacts with host NEDD4 and TSG101. Interacts with host dynamin. Interacts with host NDUFAF4; the interaction inhibits viral propagation and is independent of interferon activation. Interacts with host GTF2H5; the interaction may inhibit host transcription. In terms of processing, phosphorylated by host.

The protein resides in the virion. It localises to the host endomembrane system. Its subcellular location is the host nucleus membrane. The protein localises to the host nucleus. It is found in the host cytoplasm. Functionally, forms a double layer around the helical nucleocapsid, the inner matrix layer binding to the N helix and the outer matrix layer binding to the envelope glycoprotein. Plays a major role in assembly and budding of virion, by recruiting cellular partners of the ESCRT complexes that play a key role in releasing the budding particle from the host membrane. Condensates the ribonucleocapsid core during virus assembly. Inhibits the host mRNA nuclear export thereby inducing the shut off of cellular transcription and preventing the interferon signaling and the establishment of antiviral state in infected cells. This shutoff presumably inhibits interferon signaling and thus establishment of antiviral state in virus infected cells. Induces cell-rounding, cytoskeleton disorganization and apoptosis in infected cell. Inhibits host transcription, possibly through interaction with host DNA repair factor IIH/TFIIH GTF2H5 subunit. The sequence is that of Matrix protein (M) from Vesicular stomatitis Indiana virus (strain 85CLB South America) (VSIV).